Reading from the N-terminus, the 389-residue chain is GDSL esterase/lipase At5g14450 (389 aa).

The first 30 residues, 1 to 30 (MKDNLERAKLMVSSTVFSWLLLCLFAVTTS), serve as a signal peptide directing secretion. Serine 48 (nucleophile) is an active-site residue. N-linked (GlcNAc...) asparagine glycosylation is found at asparagine 125 and asparagine 335. Catalysis depends on residues aspartate 354 and histidine 357.

This sequence belongs to the 'GDSL' lipolytic enzyme family.

The protein localises to the secreted. The polypeptide is GDSL esterase/lipase At5g14450 (Arabidopsis thaliana (Mouse-ear cress)).